The sequence spans 206 residues: 3-demethoxyubiquinol 3-hydroxylase (206 aa).

Fe cation is bound by residues Glu55, Glu85, His88, Glu137, Glu169, and His172.

This sequence belongs to the COQ7 family. Fe cation is required as a cofactor.

It is found in the cell membrane. It carries out the reaction a 5-methoxy-2-methyl-3-(all-trans-polyprenyl)benzene-1,4-diol + AH2 + O2 = a 3-demethylubiquinol + A + H2O. It participates in cofactor biosynthesis; ubiquinone biosynthesis. In terms of biological role, catalyzes the hydroxylation of 2-nonaprenyl-3-methyl-6-methoxy-1,4-benzoquinol during ubiquinone biosynthesis. The sequence is that of 3-demethoxyubiquinol 3-hydroxylase from Laribacter hongkongensis (strain HLHK9).